The chain runs to 900 residues: Isoleucine--tRNA ligase (900 aa).

The 'HIGH' region motif lies at 58 to 68 (PYANGNIHIGH). Position 552 (E552) interacts with L-isoleucyl-5'-AMP. The short motif at 593-597 (KMSKS) is the 'KMSKS' region element. K596 provides a ligand contact to ATP.

It belongs to the class-I aminoacyl-tRNA synthetase family. IleS type 1 subfamily. As to quaternary structure, monomer.

It is found in the cytoplasm. The catalysed reaction is tRNA(Ile) + L-isoleucine + ATP = L-isoleucyl-tRNA(Ile) + AMP + diphosphate. In terms of biological role, catalyzes the attachment of isoleucine to tRNA(Ile). As IleRS can inadvertently accommodate and process structurally similar amino acids such as valine, to avoid such errors it has two additional distinct tRNA(Ile)-dependent editing activities. One activity is designated as 'pretransfer' editing and involves the hydrolysis of activated Val-AMP. The other activity is designated 'posttransfer' editing and involves deacylation of mischarged Val-tRNA(Ile). In Ureaplasma parvum serovar 3 (strain ATCC 700970), this protein is Isoleucine--tRNA ligase.